Here is a 637-residue protein sequence, read N- to C-terminus: Chaperone protein HtpG (637 aa).

Positions 1 to 345 (MSQQETHGFQ…SNDLPLNVSR (345 aa)) are a; substrate-binding. Residues 346 to 562 (EILQDNHITK…EGEMSSQMIK (217 aa)) form a b region. The c stretch occupies residues 563 to 637 (LMQAAGQPVP…MNQMLLANLK (75 aa)).

This sequence belongs to the heat shock protein 90 family. Homodimer.

It is found in the cytoplasm. Functionally, molecular chaperone. Has ATPase activity. The sequence is that of Chaperone protein HtpG from Shewanella sp. (strain ANA-3).